Reading from the N-terminus, the 233-residue chain is Orotidine 5'-phosphate decarboxylase (233 aa).

Substrate-binding positions include Asp11, Lys33, 60–69, Thr120, Arg181, Gln190, Gly210, and Arg211; that span reads DLKFHDIPNT. Lys62 serves as the catalytic Proton donor.

Belongs to the OMP decarboxylase family. Type 1 subfamily. Homodimer.

It carries out the reaction orotidine 5'-phosphate + H(+) = UMP + CO2. It participates in pyrimidine metabolism; UMP biosynthesis via de novo pathway; UMP from orotate: step 2/2. Its function is as follows. Catalyzes the decarboxylation of orotidine 5'-monophosphate (OMP) to uridine 5'-monophosphate (UMP). This is Orotidine 5'-phosphate decarboxylase from Vibrio campbellii (strain ATCC BAA-1116).